The following is a 166-amino-acid chain: ATP synthase subunit b 1 (166 aa).

Residues 7 to 29 (FWTALAFVLFFVIFGRKLWVAIT) form a helical membrane-spanning segment.

This sequence belongs to the ATPase B chain family. In terms of assembly, F-type ATPases have 2 components, F(1) - the catalytic core - and F(0) - the membrane proton channel. F(1) has five subunits: alpha(3), beta(3), gamma(1), delta(1), epsilon(1). F(0) has three main subunits: a(1), b(2) and c(10-14). The alpha and beta chains form an alternating ring which encloses part of the gamma chain. F(1) is attached to F(0) by a central stalk formed by the gamma and epsilon chains, while a peripheral stalk is formed by the delta and b chains.

It localises to the cell inner membrane. Functionally, f(1)F(0) ATP synthase produces ATP from ADP in the presence of a proton or sodium gradient. F-type ATPases consist of two structural domains, F(1) containing the extramembraneous catalytic core and F(0) containing the membrane proton channel, linked together by a central stalk and a peripheral stalk. During catalysis, ATP synthesis in the catalytic domain of F(1) is coupled via a rotary mechanism of the central stalk subunits to proton translocation. Its function is as follows. Component of the F(0) channel, it forms part of the peripheral stalk, linking F(1) to F(0). This is ATP synthase subunit b 1 from Gluconobacter oxydans (strain 621H) (Gluconobacter suboxydans).